We begin with the raw amino-acid sequence, 261 residues long: Short-chain dehydrogenase/reductase AFUA_1G00990 (261 aa).

Leu-19, Asp-67, Asn-94, Tyr-169, Lys-173, and Thr-213 together coordinate NADP(+). The active-site Proton donor is Tyr-169. The Lowers pKa of active site Tyr role is filled by Lys-173.

It belongs to the short-chain dehydrogenases/reductases (SDR) family.

In terms of biological role, short-chain dehydrogenase/reductase; part of the gene cluster that mediates the biosynthesis of fumigermin that inhibits germination of spores of the inducing S.rapamycinicus, and thus helps the fungus to defend resources in the shared habitat against a bacterial competitor. The partially reducing polyketide synthase fngA alone is sufficient for the production of fumigermin. FgnA catalyzes the condensation of 3 malonyl-CoA units to an acetyl-CoA starter, and 3 methylations to yield fumigermin. It is remarkable that the five cluster genes including fgnA are conserved in distantly related fungi, supporting the assumption of a fumigermin cluster; it is thus possible that originally all five genes were functional, but that the genes encoding tailoring enzymes became inactive from mutations, similar to the case of the fgnA gene in strains A1163 and Af293. The sequence is that of Short-chain dehydrogenase/reductase AFUA_1G00990 from Aspergillus fumigatus (strain ATCC MYA-4609 / CBS 101355 / FGSC A1100 / Af293) (Neosartorya fumigata).